Reading from the N-terminus, the 152-residue chain is Large ribosomal subunit protein uL22 (152 aa).

It belongs to the universal ribosomal protein uL22 family. As to quaternary structure, part of the 50S ribosomal subunit.

Functionally, this protein binds specifically to 23S rRNA. It makes multiple contacts with different domains of the 23S rRNA in the assembled 50S subunit and ribosome. The globular domain of the protein is located near the polypeptide exit tunnel on the outside of the subunit, while an extended beta-hairpin is found that lines the wall of the exit tunnel in the center of the 70S ribosome. This chain is Large ribosomal subunit protein uL22, found in Cenarchaeum symbiosum (strain A).